The sequence spans 918 residues: Leucine--tRNA ligase (918 aa).

The 'HIGH' region signature appears at 40-51 (PYPSGVGLHVGH). The short motif at 692-696 (KMSKS) is the 'KMSKS' region element. Lys-695 contacts ATP.

Belongs to the class-I aminoacyl-tRNA synthetase family.

The protein localises to the cytoplasm. The enzyme catalyses tRNA(Leu) + L-leucine + ATP = L-leucyl-tRNA(Leu) + AMP + diphosphate. The sequence is that of Leucine--tRNA ligase from Azobacteroides pseudotrichonymphae genomovar. CFP2.